A 327-amino-acid polypeptide reads, in one-letter code: Movement protein (327 aa).

A coiled-coil region spans residues 297-327 (SASSSNTENELARVSQNIDLLKNKLKEICGE).

The protein belongs to the caulimoviridae movement protein family. In terms of assembly, homotrimer, through the coiled-coil domain. Interacts with VAP. May interact (via N-terminus) with host prenylated Rab acceptor protein 1D (PRA1D).

The protein localises to the host cell junction. It is found in the host plasmodesma. Transports viral genome to neighboring plant cells directly through plasmosdesmata, without any budding. The movement protein allows efficient cell to cell propagation, by bypassing the host cell wall barrier. Acts by forming tubules structures that increase the size exclusion limit (SEL) of plasmodesmata, thereby allowing viral ribonucleocapsids to spread directly to neighboring cells. The sequence is that of Movement protein from Arabidopsis thaliana (Mouse-ear cress).